The sequence spans 431 residues: Enolase (431 aa).

Residue glutamine 167 coordinates (2R)-2-phosphoglycerate. The active-site Proton donor is the glutamate 209. Aspartate 246, glutamate 289, and aspartate 316 together coordinate Mg(2+). The (2R)-2-phosphoglycerate site is built by lysine 341, arginine 370, serine 371, and lysine 392. Residue lysine 341 is the Proton acceptor of the active site.

This sequence belongs to the enolase family. As to quaternary structure, component of the RNA degradosome, a multiprotein complex involved in RNA processing and mRNA degradation. It depends on Mg(2+) as a cofactor.

The protein localises to the cytoplasm. It is found in the secreted. It localises to the cell surface. It catalyses the reaction (2R)-2-phosphoglycerate = phosphoenolpyruvate + H2O. The protein operates within carbohydrate degradation; glycolysis; pyruvate from D-glyceraldehyde 3-phosphate: step 4/5. Functionally, catalyzes the reversible conversion of 2-phosphoglycerate (2-PG) into phosphoenolpyruvate (PEP). It is essential for the degradation of carbohydrates via glycolysis. The polypeptide is Enolase (Shewanella baltica (strain OS155 / ATCC BAA-1091)).